The sequence spans 328 residues: tRNA uridine(34) hydroxylase (328 aa).

Residues 130 to 224 form the Rhodanese domain; it reads LDEDTVVLDT…YGKDPEVQGE (95 aa). Catalysis depends on C184, which acts as the Cysteine persulfide intermediate.

It belongs to the TrhO family.

It catalyses the reaction uridine(34) in tRNA + AH2 + O2 = 5-hydroxyuridine(34) in tRNA + A + H2O. Its function is as follows. Catalyzes oxygen-dependent 5-hydroxyuridine (ho5U) modification at position 34 in tRNAs. This chain is tRNA uridine(34) hydroxylase, found in Streptococcus sanguinis (strain SK36).